A 192-amino-acid chain; its full sequence is Xanthine phosphoribosyltransferase (192 aa).

The xanthine site is built by L20 and N27. 128–132 (ANGQA) lines the 5-phospho-alpha-D-ribose 1-diphosphate pocket. Residue K156 participates in xanthine binding.

The protein belongs to the purine/pyrimidine phosphoribosyltransferase family. Xpt subfamily. As to quaternary structure, homodimer.

It localises to the cytoplasm. The catalysed reaction is XMP + diphosphate = xanthine + 5-phospho-alpha-D-ribose 1-diphosphate. It participates in purine metabolism; XMP biosynthesis via salvage pathway; XMP from xanthine: step 1/1. Functionally, converts the preformed base xanthine, a product of nucleic acid breakdown, to xanthosine 5'-monophosphate (XMP), so it can be reused for RNA or DNA synthesis. This is Xanthine phosphoribosyltransferase from Lacticaseibacillus casei (strain BL23) (Lactobacillus casei).